The primary structure comprises 366 residues: RNA 3'-terminal phosphate cyclase (366 aa).

Residues glutamine 104, proline 131, tyrosine 294, aspartate 297, glutamine 298, and histidine 320 each coordinate ATP. The Tele-AMP-histidine intermediate role is filled by histidine 320.

It belongs to the RNA 3'-terminal cyclase family. Type 1 subfamily. As to expression, detected in retinal ganglion cells (RGCs) (at protein level).

The protein localises to the nucleus. Its subcellular location is the nucleoplasm. It catalyses the reaction a 3'-end 3'-phospho-ribonucleotide-RNA + ATP = a 3'-end 2',3'-cyclophospho-ribonucleotide-RNA + AMP + diphosphate. Catalyzes the conversion of 3'-phosphate to a 2',3'-cyclic phosphodiester at the end of RNA. The mechanism of action of the enzyme occurs in 3 steps: (A) adenylation of the enzyme by ATP; (B) transfer of adenylate to an RNA-N3'P to produce RNA-N3'PP5'A; (C) and attack of the adjacent 2'-hydroxyl on the 3'-phosphorus in the diester linkage to produce the cyclic end product. Likely functions in some aspects of cellular RNA processing. Function plays an important role in regulating axon regeneration by inhibiting central nervous system (CNS) axon regeneration following optic nerve injury. The polypeptide is RNA 3'-terminal phosphate cyclase (Mus musculus (Mouse)).